Here is a 566-residue protein sequence, read N- to C-terminus: Zinc finger protein 704 (566 aa).

Disordered stretches follow at residues 1–148 (MQAR…ARGA), 166–203 (DFRRDSSKKPSHHLFPLAMEEDVRTADTKKTSRVLDQE), and 253–324 (PLVR…DEAD). Residues 12 to 31 (LGSRRGGAAPAPAPEAAALG) are compositionally biased toward low complexity. The span at 32-55 (LPPPGPSPAAAPGSWRPPLPPPRG) shows a compositional bias: pro residues. Low complexity predominate over residues 56–72 (TGPSRAAAASSPVLLLL). Positions 91–100 (RVTEKPRGVA) are enriched in basic and acidic residues. A compositionally biased stretch (acidic residues) spans 101–128 (EEEDDDEEEDEEVVVEVVDGDEDDEDAE). Over residues 186–203 (EDVRTADTKKTSRVLDQE) the composition is skewed to basic and acidic residues. Residues 267–290 (SGSWKEGAPSSSSSSGYWSWSAPS) show a composition bias toward low complexity. Residues 346-371 (FKCLWKSCGKVLNTAAGIQKHIRAVH) form a C2H2-type zinc finger. 2 positions are modified to phosphoserine: serine 378 and serine 381. Disordered stretches follow at residues 409-436 (VSPSQSLASAPAFPIPDSSRTETPCAKT) and 497-535 (PVSPPHHPTAGSGEQRQHAHTALSSPPRGTVTLRKPRGE). Positions 471-566 (GSAKFTPNGS…WKKACQRFID (96 aa)) are sufficient for binding to RE2 sequence motifs. Positions 537–541 (KKCRK) match the CR1 motif. Residues 555 to 559 (CRWKK) carry the CR2 motif.

The protein resides in the nucleus. Functionally, transcription factor which binds to RE2 sequence elements in the MYOD1 enhancer. In Mus musculus (Mouse), this protein is Zinc finger protein 704.